The primary structure comprises 530 residues: Membrane protein insertase YidC (530 aa).

4 consecutive transmembrane segments (helical) span residues 5–25, 348–368, 418–438, and 492–512; these read VVIA…MFPP, YGLA…PLTH, LPML…MFSI, and PVVF…YWLI.

This sequence belongs to the OXA1/ALB3/YidC family. Type 1 subfamily. As to quaternary structure, interacts with the Sec translocase complex via SecD. Specifically interacts with transmembrane segments of nascent integral membrane proteins during membrane integration.

It localises to the cell inner membrane. Its function is as follows. Required for the insertion and/or proper folding and/or complex formation of integral membrane proteins into the membrane. Involved in integration of membrane proteins that insert both dependently and independently of the Sec translocase complex, as well as at least some lipoproteins. Aids folding of multispanning membrane proteins. The polypeptide is Membrane protein insertase YidC (Geotalea daltonii (strain DSM 22248 / JCM 15807 / FRC-32) (Geobacter daltonii)).